Here is a 189-residue protein sequence, read N- to C-terminus: MKTLAPSYLKHQFLIAMPHMADPNFAQTLTYIVEHNEHGAMGLVVNRPQELSLADILEQLRPDEMPPASTSQVPIYQGGPVQTDRGFVLHSSECSFQATVALEGLSLTTSQDVLLAIAAGVGPKQSLITLGYAGWEAGQLEAELADNAWLNCPFDPEIIFGMANDLRLEAAAASLGINLHLLTSQAGHA.

Belongs to the UPF0301 (AlgH) family.

This Pseudomonas putida (strain GB-1) protein is UPF0301 protein PputGB1_5045.